Here is a 468-residue protein sequence, read N- to C-terminus: Uronate isomerase (468 aa).

The protein belongs to the metallo-dependent hydrolases superfamily. Uronate isomerase family.

The catalysed reaction is D-glucuronate = D-fructuronate. The enzyme catalyses aldehydo-D-galacturonate = keto-D-tagaturonate. It participates in carbohydrate metabolism; pentose and glucuronate interconversion. This is Uronate isomerase from Bacteroides thetaiotaomicron (strain ATCC 29148 / DSM 2079 / JCM 5827 / CCUG 10774 / NCTC 10582 / VPI-5482 / E50).